We begin with the raw amino-acid sequence, 155 residues long: Ribosomal RNA large subunit methyltransferase H (155 aa).

S-adenosyl-L-methionine is bound by residues Leu72, Gly103, and 122-127; that span reads LSPLTL.

It belongs to the RNA methyltransferase RlmH family. Homodimer.

The protein resides in the cytoplasm. The enzyme catalyses pseudouridine(1915) in 23S rRNA + S-adenosyl-L-methionine = N(3)-methylpseudouridine(1915) in 23S rRNA + S-adenosyl-L-homocysteine + H(+). Functionally, specifically methylates the pseudouridine at position 1915 (m3Psi1915) in 23S rRNA. This Aeromonas salmonicida (strain A449) protein is Ribosomal RNA large subunit methyltransferase H.